The sequence spans 348 residues: tRNA N6-adenosine threonylcarbamoyltransferase (348 aa).

Fe cation is bound by residues His-115 and His-119. Residues 137 to 141 (LASGG), Asp-170, Gly-183, and Asn-281 contribute to the substrate site. Asp-309 lines the Fe cation pocket.

This sequence belongs to the KAE1 / TsaD family. Fe(2+) serves as cofactor.

It is found in the cytoplasm. It catalyses the reaction L-threonylcarbamoyladenylate + adenosine(37) in tRNA = N(6)-L-threonylcarbamoyladenosine(37) in tRNA + AMP + H(+). Required for the formation of a threonylcarbamoyl group on adenosine at position 37 (t(6)A37) in tRNAs that read codons beginning with adenine. Is involved in the transfer of the threonylcarbamoyl moiety of threonylcarbamoyl-AMP (TC-AMP) to the N6 group of A37, together with TsaE and TsaB. TsaD likely plays a direct catalytic role in this reaction. The sequence is that of tRNA N6-adenosine threonylcarbamoyltransferase from Methylobacterium sp. (strain 4-46).